Here is an 883-residue protein sequence, read N- to C-terminus: Phosphoenolpyruvate carboxylase (883 aa).

Active-site residues include His-138 and Lys-546.

This sequence belongs to the PEPCase type 1 family. It depends on Mg(2+) as a cofactor.

The catalysed reaction is oxaloacetate + phosphate = phosphoenolpyruvate + hydrogencarbonate. Forms oxaloacetate, a four-carbon dicarboxylic acid source for the tricarboxylic acid cycle. The polypeptide is Phosphoenolpyruvate carboxylase (Salmonella dublin (strain CT_02021853)).